A 218-amino-acid chain; its full sequence is N-alpha-acetyltransferase 11 (218 aa).

Residues 1–58 are interaction with NAA15; it reads MNIRNARPDDLMNMQHCNLLCLPENYQMKYYFYHGLSWPQLSYIAEDEDGKIVGYVLA. An N-acetyltransferase domain is found at 1–152; it reads MNIRNARPDD…DAYAMKRDLS (152 aa). The interval 175 to 218 is disordered; it reads EETQGGTLPDAGEACLPKNPTSKDSGSSDSTDVQDSSEDLDSIS. Residues 196–205 are compositionally biased toward low complexity; that stretch reads SKDSGSSDST. A compositionally biased stretch (acidic residues) spans 209–218; that stretch reads DSSEDLDSIS.

It belongs to the acetyltransferase family. ARD1 subfamily. As to quaternary structure, component of the N-terminal acetyltransferase A (NatA) complex composed of NAA11 and NAA15. Interacts with HIF1A.

The protein localises to the cytoplasm. The protein resides in the nucleus. The catalysed reaction is N-terminal glycyl-[protein] + acetyl-CoA = N-terminal N(alpha)-acetylglycyl-[protein] + CoA + H(+). The enzyme catalyses N-terminal L-alanyl-[protein] + acetyl-CoA = N-terminal N(alpha)-acetyl-L-alanyl-[protein] + CoA + H(+). It carries out the reaction N-terminal L-seryl-[protein] + acetyl-CoA = N-terminal N(alpha)-acetyl-L-seryl-[protein] + CoA + H(+). It catalyses the reaction N-terminal L-valyl-[protein] + acetyl-CoA = N-terminal N(alpha)-acetyl-L-valyl-[protein] + CoA + H(+). The catalysed reaction is N-terminal L-cysteinyl-[protein] + acetyl-CoA = N-terminal N(alpha)-acetyl-L-cysteinyl-[protein] + CoA + H(+). The enzyme catalyses N-terminal L-threonyl-[protein] + acetyl-CoA = N-terminal N(alpha)-acetyl-L-threonyl-[protein] + CoA + H(+). Displays alpha (N-terminal) acetyltransferase activity. Proposed alternative catalytic subunit of the N-terminal acetyltransferase A (NatA) complex. The polypeptide is N-alpha-acetyltransferase 11 (Naa11) (Mus musculus (Mouse)).